Consider the following 282-residue polypeptide: Secretory carrier-associated membrane protein 3 (282 aa).

A disordered region spans residues 1–36 (MAGKHGRNGFEDDDVNPFAGGSVPPANNSRLPPLSH). At 1 to 117 (MAGKHGRNGF…EIPIHLQRMQ (117 aa)) the chain is on the cytoplasmic side. Positions 48–92 (LDSSKDLKKKEKELQAMEAELNKRERELKRKEEAAAQAGIVIEDK) form a coiled coil. 4 consecutive transmembrane segments (helical) span residues 118–138 (YLAF…IIAT), 148–168 (VIIW…AYVL), 185–205 (FGWF…AAVA), and 230–250 (IVGI…LLSI). The Cytoplasmic segment spans residues 251–282 (GVIQQVYMYFRGSGKAAEMKREAARGALSSAF).

Belongs to the SCAMP family.

It is found in the cell membrane. It localises to the cytoplasmic vesicle. Its subcellular location is the secretory vesicle membrane. Probably involved in membrane trafficking. The chain is Secretory carrier-associated membrane protein 3 (SCAMP3) from Oryza sativa subsp. japonica (Rice).